The chain runs to 499 residues: Bifunctional purine biosynthesis protein PurH (499 aa).

The region spanning 1 to 144 is the MGS-like domain; sequence MIKRALISVF…KNFKDVVVLT (144 aa).

Belongs to the PurH family.

It carries out the reaction (6R)-10-formyltetrahydrofolate + 5-amino-1-(5-phospho-beta-D-ribosyl)imidazole-4-carboxamide = 5-formamido-1-(5-phospho-D-ribosyl)imidazole-4-carboxamide + (6S)-5,6,7,8-tetrahydrofolate. It catalyses the reaction IMP + H2O = 5-formamido-1-(5-phospho-D-ribosyl)imidazole-4-carboxamide. It participates in purine metabolism; IMP biosynthesis via de novo pathway; 5-formamido-1-(5-phospho-D-ribosyl)imidazole-4-carboxamide from 5-amino-1-(5-phospho-D-ribosyl)imidazole-4-carboxamide (10-formyl THF route): step 1/1. The protein operates within purine metabolism; IMP biosynthesis via de novo pathway; IMP from 5-formamido-1-(5-phospho-D-ribosyl)imidazole-4-carboxamide: step 1/1. The chain is Bifunctional purine biosynthesis protein PurH from Clostridium botulinum (strain Okra / Type B1).